Reading from the N-terminus, the 321-residue chain is Glycerol-3-phosphate phosphatase (321 aa).

Aspartate 34 (nucleophile) is an active-site residue. 3 residues coordinate Mg(2+): aspartate 34, aspartate 36, and aspartate 260. Aspartate 36 acts as the Proton donor in catalysis.

Belongs to the HAD-like hydrolase superfamily. CbbY/CbbZ/Gph/YieH family. In terms of assembly, homodimer. Mg(2+) serves as cofactor. As to expression, expression was confirmed in liver, adipose tissue, testis and pancreatic islet.

The catalysed reaction is O-phospho-L-tyrosyl-[protein] + H2O = L-tyrosyl-[protein] + phosphate. It carries out the reaction sn-glycerol 1-phosphate + H2O = glycerol + phosphate. The enzyme catalyses sn-glycerol 3-phosphate + H2O = glycerol + phosphate. Its function is as follows. Glycerol-3-phosphate phosphatase hydrolyzing glycerol-3-phosphate into glycerol. Thereby, regulates the cellular levels of glycerol-3-phosphate a metabolic intermediate of glucose, lipid and energy metabolism. Was also shown to have a 2-phosphoglycolate phosphatase activity and a tyrosine-protein phosphatase activity. However, their physiological relevance is unclear. In vitro, also has a phosphatase activity toward ADP, ATP, GDP and GTP. The polypeptide is Glycerol-3-phosphate phosphatase (Rattus norvegicus (Rat)).